The following is a 201-amino-acid chain: Recombination protein RecR (201 aa).

Residues 60-75 form a C4-type zinc finger; sequence CSRCGNVDTVDPCTVC. Residues 83–178 enclose the Toprim domain; sequence SVIIVVEDVA…KITRLAHGVP (96 aa).

This sequence belongs to the RecR family.

Functionally, may play a role in DNA repair. It seems to be involved in an RecBC-independent recombinational process of DNA repair. It may act with RecF and RecO. The protein is Recombination protein RecR of Rhizobium rhizogenes (strain K84 / ATCC BAA-868) (Agrobacterium radiobacter).